Reading from the N-terminus, the 462-residue chain is Argininosuccinate lyase (462 aa).

The protein belongs to the lyase 1 family. Argininosuccinate lyase subfamily.

The protein resides in the cytoplasm. The enzyme catalyses 2-(N(omega)-L-arginino)succinate = fumarate + L-arginine. It functions in the pathway amino-acid biosynthesis; L-arginine biosynthesis; L-arginine from L-ornithine and carbamoyl phosphate: step 3/3. This is Argininosuccinate lyase from Bacillus cereus (strain B4264).